Consider the following 263-residue polypeptide: Shikimate dehydrogenase (NADP(+)) (263 aa).

Residues Ser-16 to Ser-18 and Thr-65 contribute to the shikimate site. The Proton acceptor role is filled by Lys-69. Positions 90 and 105 each coordinate shikimate. Residues Gly-125–Ser-129 and Leu-208 contribute to the NADP(+) site. Tyr-210 is a binding site for shikimate. Gly-230 contributes to the NADP(+) binding site.

The protein belongs to the shikimate dehydrogenase family. Homodimer.

The enzyme catalyses shikimate + NADP(+) = 3-dehydroshikimate + NADPH + H(+). It functions in the pathway metabolic intermediate biosynthesis; chorismate biosynthesis; chorismate from D-erythrose 4-phosphate and phosphoenolpyruvate: step 4/7. Inhibited by curcumin, 3-(2-naphthyloxy)-4-oxo-2-(trifluoromethyl)-4H-chromen-7-yl 3-chlorobenzoate, butyl 2-{[3-(2-naphthyloxy)-4-oxo-2-(trifluoromethyl)-4H-chromen-7-yl]oxy}propanoate, 2-({2-[(2-{[2-(2,3-dimethylanilino)-2-oxoethyl]sulfanyl}-1,3-benzothiazol-6-yl)amino]-2-oxoethyl}sulfanyl)-N-(2-naphthyl)acetamide, and maesaquinone diacetate. Functionally, involved in the biosynthesis of the chorismate, which leads to the biosynthesis of aromatic amino acids. Catalyzes the reversible NADPH linked reduction of 3-dehydroshikimate (DHSA) to yield shikimate (SA). It can also use NAD to oxidize shikimate. The sequence is that of Shikimate dehydrogenase (NADP(+)) from Helicobacter pylori (Campylobacter pylori).